Reading from the N-terminus, the 654-residue chain is DNA ligase (654 aa).

Residues 37 to 41, 86 to 87, and Glu-113 contribute to the NAD(+) site; these read DEEYD and SM. The active-site N6-AMP-lysine intermediate is the Lys-115. NAD(+)-binding residues include Arg-136, Glu-170, and Lys-308. 4 residues coordinate Zn(2+): Cys-402, Cys-405, Cys-418, and Cys-423. One can recognise a BRCT domain in the interval 576–654; it reads ITQNAFSGKS…GEFERLKLEI (79 aa).

The protein belongs to the NAD-dependent DNA ligase family. LigA subfamily. Mg(2+) serves as cofactor. Requires Mn(2+) as cofactor.

The enzyme catalyses NAD(+) + (deoxyribonucleotide)n-3'-hydroxyl + 5'-phospho-(deoxyribonucleotide)m = (deoxyribonucleotide)n+m + AMP + beta-nicotinamide D-nucleotide.. Its function is as follows. DNA ligase that catalyzes the formation of phosphodiester linkages between 5'-phosphoryl and 3'-hydroxyl groups in double-stranded DNA using NAD as a coenzyme and as the energy source for the reaction. It is essential for DNA replication and repair of damaged DNA. This Campylobacter curvus (strain 525.92) protein is DNA ligase.